The following is a 95-amino-acid chain: Putative septation protein SpoVG (95 aa).

The protein belongs to the SpoVG family.

Functionally, could be involved in septation. This Clostridium acetobutylicum (strain ATCC 824 / DSM 792 / JCM 1419 / IAM 19013 / LMG 5710 / NBRC 13948 / NRRL B-527 / VKM B-1787 / 2291 / W) protein is Putative septation protein SpoVG.